Reading from the N-terminus, the 161-residue chain is Protein PLANT CADMIUM RESISTANCE 12 (161 aa).

A helical membrane pass occupies residues 71–89 (AGLIHLALGFIGCSWLYAF).

This sequence belongs to the cornifelin family.

Its subcellular location is the membrane. Functionally, may be involved in heavy metals transport. This is Protein PLANT CADMIUM RESISTANCE 12 (PCR12) from Arabidopsis thaliana (Mouse-ear cress).